Here is a 488-residue protein sequence, read N- to C-terminus: Glutamyl-tRNA(Gln) amidotransferase subunit A (488 aa).

Active-site charge relay system residues include lysine 78 and serine 153. The Acyl-ester intermediate role is filled by serine 177.

Belongs to the amidase family. GatA subfamily. In terms of assembly, heterotrimer of A, B and C subunits.

The catalysed reaction is L-glutamyl-tRNA(Gln) + L-glutamine + ATP + H2O = L-glutaminyl-tRNA(Gln) + L-glutamate + ADP + phosphate + H(+). Its function is as follows. Allows the formation of correctly charged Gln-tRNA(Gln) through the transamidation of misacylated Glu-tRNA(Gln) in organisms which lack glutaminyl-tRNA synthetase. The reaction takes place in the presence of glutamine and ATP through an activated gamma-phospho-Glu-tRNA(Gln). The protein is Glutamyl-tRNA(Gln) amidotransferase subunit A of Thermoanaerobacter pseudethanolicus (strain ATCC 33223 / 39E) (Clostridium thermohydrosulfuricum).